Reading from the N-terminus, the 213-residue chain is Probable nicotinate-nucleotide adenylyltransferase (213 aa).

This sequence belongs to the NadD family.

It catalyses the reaction nicotinate beta-D-ribonucleotide + ATP + H(+) = deamido-NAD(+) + diphosphate. It functions in the pathway cofactor biosynthesis; NAD(+) biosynthesis; deamido-NAD(+) from nicotinate D-ribonucleotide: step 1/1. In terms of biological role, catalyzes the reversible adenylation of nicotinate mononucleotide (NaMN) to nicotinic acid adenine dinucleotide (NaAD). This is Probable nicotinate-nucleotide adenylyltransferase from Salmonella gallinarum (strain 287/91 / NCTC 13346).